The following is a 73-amino-acid chain: Translation initiation factor IF-1 (73 aa).

Residues 1–73 (MPKKEGVIEI…TRGRIVYRYK (73 aa)) form the S1-like domain.

This sequence belongs to the IF-1 family. Component of the 30S ribosomal translation pre-initiation complex which assembles on the 30S ribosome in the order IF-2 and IF-3, IF-1 and N-formylmethionyl-tRNA(fMet); mRNA recruitment can occur at any time during PIC assembly.

It is found in the cytoplasm. In terms of biological role, one of the essential components for the initiation of protein synthesis. Stabilizes the binding of IF-2 and IF-3 on the 30S subunit to which N-formylmethionyl-tRNA(fMet) subsequently binds. Helps modulate mRNA selection, yielding the 30S pre-initiation complex (PIC). Upon addition of the 50S ribosomal subunit IF-1, IF-2 and IF-3 are released leaving the mature 70S translation initiation complex. This Nocardioides sp. (strain ATCC BAA-499 / JS614) protein is Translation initiation factor IF-1.